Reading from the N-terminus, the 165-residue chain is Ubiquitin-fold modifier-conjugating enzyme 1 (165 aa).

The Glycyl thioester intermediate role is filled by Cys-116.

This sequence belongs to the ubiquitin-conjugating enzyme family. UFC1 subfamily.

E2-like enzyme which forms an intermediate with UFM1 via a thioester linkage. This chain is Ubiquitin-fold modifier-conjugating enzyme 1, found in Drosophila virilis (Fruit fly).